Here is a 194-residue protein sequence, read N- to C-terminus: Ras-related protein Rab-22A (194 aa).

12–20 (GDTGVGKSS) lines the GTP pocket. The Effector region motif lies at 34-42 (INPTIGASF). GTP is bound by residues 60–64 (DTAGQ), 118–121 (NKCD), and 148–150 (SAK). Positions 170-194 (DANPASGGKGFKLRRQPSEPKRSCC) are disordered. The span at 185-194 (QPSEPKRSCC) shows a compositional bias: basic and acidic residues. Residues C193 and C194 are each lipidated (S-geranylgeranyl cysteine).

Belongs to the small GTPase superfamily. Rab family. Binds EEA1. Interacts (in its GTP-bound form) with RINL. Interacts directly with ZFYVE20. Interacts (in its GTP-bound form) with RABGEF1. Detected in brain and heart, and at lower levels in lung and spleen.

It is found in the endosome membrane. The protein resides in the cell membrane. It localises to the early endosome. Its subcellular location is the late endosome. The protein localises to the cell projection. It is found in the ruffle. The protein resides in the cytoplasmic vesicle. It localises to the phagosome. Its subcellular location is the phagosome membrane. Plays a role in endocytosis and intracellular protein transport. Mediates trafficking of TF from early endosomes to recycling endosomes. Required for NGF-mediated endocytosis of NTRK1, and subsequent neurite outgrowth. Binds GTP and GDP and has low GTPase activity. Alternates between a GTP-bound active form and a GDP-bound inactive form. The protein is Ras-related protein Rab-22A (Rab22a) of Mus musculus (Mouse).